Reading from the N-terminus, the 175-residue chain is uncharacterized protein (175 aa).

This is an uncharacterized protein from Acanthamoeba polyphaga (Amoeba).